A 275-amino-acid chain; its full sequence is MPELPEVETVRRTLAGLVRGKTIDAVDVRWTKIIKRPEEPEEFARLLAGQTIQSIGRRGKFLLFHLDDCVMVSHLRMEGKYGLHQNDEPLDKHVHVIFRFTDGSELRYRDVRKFGTMHLFKPGEELTELPLRQLGPEPFSSEFTADYLRERLKKTNRSVKTALLDQRTVVGLGNIYVDEALFRAGIHPEATANKLTKKQTVLLHKEIIQTLKEAVEAGGSTVRSYINSQGEIGMFQLKLFVYGRKDEPCKKCGSPIEKTVVGGRGTHFCIKCQKK.

The active-site Schiff-base intermediate with DNA is proline 2. Glutamate 3 functions as the Proton donor in the catalytic mechanism. Catalysis depends on lysine 60, which acts as the Proton donor; for beta-elimination activity. Histidine 93 and arginine 112 together coordinate DNA. The segment at 240–274 adopts an FPG-type zinc-finger fold; it reads FVYGRKDEPCKKCGSPIEKTVVGGRGTHFCIKCQK. Catalysis depends on arginine 264, which acts as the Proton donor; for delta-elimination activity.

The protein belongs to the FPG family. Monomer. Requires Zn(2+) as cofactor.

The enzyme catalyses Hydrolysis of DNA containing ring-opened 7-methylguanine residues, releasing 2,6-diamino-4-hydroxy-5-(N-methyl)formamidopyrimidine.. It carries out the reaction 2'-deoxyribonucleotide-(2'-deoxyribose 5'-phosphate)-2'-deoxyribonucleotide-DNA = a 3'-end 2'-deoxyribonucleotide-(2,3-dehydro-2,3-deoxyribose 5'-phosphate)-DNA + a 5'-end 5'-phospho-2'-deoxyribonucleoside-DNA + H(+). In terms of biological role, involved in base excision repair of DNA damaged by oxidation or by mutagenic agents. Acts as a DNA glycosylase that recognizes and removes damaged bases. Has a preference for oxidized purines, such as 7,8-dihydro-8-oxoguanine (8-oxoG). Has AP (apurinic/apyrimidinic) lyase activity and introduces nicks in the DNA strand. Cleaves the DNA backbone by beta-delta elimination to generate a single-strand break at the site of the removed base with both 3'- and 5'-phosphates. This is Formamidopyrimidine-DNA glycosylase from Bacillus licheniformis (strain ATCC 14580 / DSM 13 / JCM 2505 / CCUG 7422 / NBRC 12200 / NCIMB 9375 / NCTC 10341 / NRRL NRS-1264 / Gibson 46).